A 609-amino-acid chain; its full sequence is MCGIVGAIAGRDVVPVLIEGLKRLEYRGYDSSGIAVLDGTQVRRVRRTGRVAEMAQAAQAEQFGATLGIGHTRWATHGGVTEANAHPHISAGVALVHNGIIENHEEQREKLRALGYTFESQTDTEVIAHLIHHHLADAGDLLSALQRTVKELTGAYALAVMSQAEQERFVCARMGCPLLIGVGEGENFVASDVSAIVQATRQVIFLEEGDTAELRRDGVRVFDASDAAVERPLHLSDVSLASLELGPFRHFMQKEIHEQPRALADTIEAAIDAKGFPASLFGPTADAVLRDIEGVQILACGTSYYAGLTARYWIEAIAGLPCSVEIASEYRYRAAYANPKHLIVTISQSGETLDTMEALKYAKSLGHLHTLSICNVPESAIPRASELVCYTRAGAEIGVASTKAFTTQLAVLFQLTMVLGKLQGRISDSEEADYLEQLRFLPGSVQHALNLEPQIMAWAERFSPKENALFLGRGLHYPIALEGALKLKEISYIHAEAYPAGELKHGPLALVDATMPVVVIAPNDRLLEKVKSNMQEVRARGGELFVFADQDSHFSESDGVHVIRTPRHAGVLSPVIHTIPVQLLAYHTALARGTDVDKPRNLAKSVTVE.

The active-site Nucleophile; for GATase activity is the Cys2. The 216-residue stretch at 2 to 217 (CGIVGAIAGR…EGDTAELRRD (216 aa)) folds into the Glutamine amidotransferase type-2 domain. SIS domains are found at residues 284–425 (TADA…LQGR) and 458–599 (WAER…VDKP). The For Fru-6P isomerization activity role is filled by Lys604.

In terms of assembly, homodimer.

It is found in the cytoplasm. The enzyme catalyses D-fructose 6-phosphate + L-glutamine = D-glucosamine 6-phosphate + L-glutamate. Functionally, catalyzes the first step in hexosamine metabolism, converting fructose-6P into glucosamine-6P using glutamine as a nitrogen source. The chain is Glutamine--fructose-6-phosphate aminotransferase [isomerizing] from Xanthomonas campestris pv. campestris (strain ATCC 33913 / DSM 3586 / NCPPB 528 / LMG 568 / P 25).